The primary structure comprises 236 residues: SPbeta prophage-derived uncharacterized protein YomV (236 aa).

The polypeptide is SPbeta prophage-derived uncharacterized protein YomV (yomV) (Bacillus subtilis (strain 168)).